Consider the following 181-residue polypeptide: Acireductone dioxygenase (181 aa).

Fe(2+) is bound by residues histidine 98, histidine 100, glutamate 104, and histidine 142. Residues histidine 98, histidine 100, glutamate 104, and histidine 142 each contribute to the Ni(2+) site.

It belongs to the acireductone dioxygenase (ARD) family. Monomer. Requires Fe(2+) as cofactor. Ni(2+) serves as cofactor.

The catalysed reaction is 1,2-dihydroxy-5-(methylsulfanyl)pent-1-en-3-one + O2 = 3-(methylsulfanyl)propanoate + CO + formate + 2 H(+). The enzyme catalyses 1,2-dihydroxy-5-(methylsulfanyl)pent-1-en-3-one + O2 = 4-methylsulfanyl-2-oxobutanoate + formate + 2 H(+). The protein operates within amino-acid biosynthesis; L-methionine biosynthesis via salvage pathway; L-methionine from S-methyl-5-thio-alpha-D-ribose 1-phosphate: step 5/6. Its function is as follows. Catalyzes 2 different reactions between oxygen and the acireductone 1,2-dihydroxy-3-keto-5-methylthiopentene (DHK-MTPene) depending upon the metal bound in the active site. Fe-containing acireductone dioxygenase (Fe-ARD) produces formate and 2-keto-4-methylthiobutyrate (KMTB), the alpha-ketoacid precursor of methionine in the methionine recycle pathway. Ni-containing acireductone dioxygenase (Ni-ARD) produces methylthiopropionate, carbon monoxide and formate, and does not lie on the methionine recycle pathway. The chain is Acireductone dioxygenase from Synechococcus sp. (strain ATCC 27144 / PCC 6301 / SAUG 1402/1) (Anacystis nidulans).